The chain runs to 202 residues: Putative 3-methyladenine DNA glycosylase (202 aa).

The protein belongs to the DNA glycosylase MPG family.

This Clostridioides difficile (strain 630) (Peptoclostridium difficile) protein is Putative 3-methyladenine DNA glycosylase.